The sequence spans 266 residues: Chymotrypsin-like elastase family member 1 (266 aa).

The signal sequence occupies residues 1 to 16 (MLRFLVFASLVLCGHS). The propeptide at 17 to 26 (TEDVPETDAR) is activation peptide. The Peptidase S1 domain maps to 27 to 264 (VVGGAEARRN…YISWMNNVIA (238 aa)). The cysteines at positions 56 and 72 are disulfide-linked. His-71 (charge relay system) is an active-site residue. Residues Glu-85, Asn-87, Gln-90, and Glu-95 each contribute to the Ca(2+) site. An N-linked (GlcNAc...) asparagine glycan is attached at Asn-87. The active-site Charge relay system is Asp-119. Cystine bridges form between Cys-153–Cys-220, Cys-184–Cys-200, and Cys-210–Cys-240. The Charge relay system role is filled by Ser-214.

It belongs to the peptidase S1 family. Elastase subfamily. It depends on Ca(2+) as a cofactor.

It localises to the secreted. It carries out the reaction Hydrolysis of proteins, including elastin. Preferential cleavage: Ala-|-Xaa.. Serine proteases that hydrolyze many proteins in addition to elastin. The protein is Chymotrypsin-like elastase family member 1 (Cela1) of Mus musculus (Mouse).